The sequence spans 379 residues: Cytochrome b (379 aa).

A run of 4 helical transmembrane segments spans residues 33–53, 77–98, 113–133, and 178–198; these read FGSL…FLAM, WLIR…YLHI, WNIG…GYVL, and FFAF…LHLL. Heme b-binding residues include His-83 and His-97. Heme b is bound by residues His-182 and His-196. His-201 contacts a ubiquinone. The next 4 membrane-spanning stretches (helical) occupy residues 226 to 246, 288 to 308, 320 to 340, and 347 to 367; these read YKDL…ALFY, LGGV…PILH, ASQL…WIGG, and YIII…VLNP.

This sequence belongs to the cytochrome b family. The cytochrome bc1 complex contains 3 respiratory subunits (MT-CYB, CYC1 and UQCRFS1), 2 core proteins (UQCRC1 and UQCRC2) and probably 6 low-molecular weight proteins. The cofactor is heme b.

It is found in the mitochondrion inner membrane. In terms of biological role, component of the ubiquinol-cytochrome c reductase complex (complex III or cytochrome b-c1 complex) that is part of the mitochondrial respiratory chain. The b-c1 complex mediates electron transfer from ubiquinol to cytochrome c. Contributes to the generation of a proton gradient across the mitochondrial membrane that is then used for ATP synthesis. This chain is Cytochrome b (mt-cyb), found in Anguilla anguilla (European freshwater eel).